The following is a 571-amino-acid chain: Urease subunit alpha (571 aa).

A Urease domain is found at 129–571; it reads GGIDTHIHFI…LPMAQRYFLF (443 aa). The Ni(2+) site is built by histidine 134, histidine 136, and lysine 217. The residue at position 217 (lysine 217) is an N6-carboxylysine. Histidine 219 contacts substrate. Positions 246 and 272 each coordinate Ni(2+). Histidine 320 acts as the Proton donor in catalysis. Aspartate 360 provides a ligand contact to Ni(2+).

Belongs to the metallo-dependent hydrolases superfamily. Urease alpha subunit family. Heterotrimer of UreA (gamma), UreB (beta) and UreC (alpha) subunits. Three heterotrimers associate to form the active enzyme. Requires Ni cation as cofactor. Carboxylation allows a single lysine to coordinate two nickel ions.

It localises to the cytoplasm. The enzyme catalyses urea + 2 H2O + H(+) = hydrogencarbonate + 2 NH4(+). Its pathway is nitrogen metabolism; urea degradation; CO(2) and NH(3) from urea (urease route): step 1/1. This is Urease subunit alpha from Cupriavidus pinatubonensis (strain JMP 134 / LMG 1197) (Cupriavidus necator (strain JMP 134)).